The chain runs to 493 residues: Sorting nexin-4 (493 aa).

The segment at 1–77 (MAVIDQDNFS…ILDCTVSDPH (77 aa)) is disordered. The segment covering 7 to 28 (DNFSNISWHSEQNAESAASTAQ) has biased composition (polar residues). The segment covering 56 to 65 (MEHDELDHSG) has biased composition (basic and acidic residues). The region spanning 68 to 190 (ILDCTVSDPH…AFLESPDWNA (123 aa)) is the PX domain. A 1,2-diacyl-sn-glycero-3-phospho-(1D-myo-inositol-3-phosphate)-binding residues include arginine 111, threonine 113, lysine 137, and arginine 156. Coiled-coil stretches lie at residues 248-292 (EIKE…QKLI), 338-363 (SGTL…EYLN), and 405-442 (EQAR…QVSR).

Belongs to the sorting nexin family.

The protein resides in the cytoplasm. The protein localises to the membrane. Its subcellular location is the endosome membrane. Functionally, sorting nexin, involved in the separation or division of vacuoles throughout the entire life cycle of the cells. Involved in retrieval of late-Golgi SNAREs from post-Golgi endosomes to the trans-Golgi network, for cytoplasm to vacuole transport (Cvt), and autophagy of large cargos including mitophagy, pexophagy and glycophagy. The sequence is that of Sorting nexin-4 (vsp-5) from Neurospora crassa (strain ATCC 24698 / 74-OR23-1A / CBS 708.71 / DSM 1257 / FGSC 987).